Here is a 173-residue protein sequence, read N- to C-terminus: Probable chemoreceptor glutamine deamidase CheD 2 (173 aa).

It belongs to the CheD family.

It catalyses the reaction L-glutaminyl-[protein] + H2O = L-glutamyl-[protein] + NH4(+). Its function is as follows. Probably deamidates glutamine residues to glutamate on methyl-accepting chemotaxis receptors (MCPs), playing an important role in chemotaxis. The chain is Probable chemoreceptor glutamine deamidase CheD 2 from Albidiferax ferrireducens (strain ATCC BAA-621 / DSM 15236 / T118) (Rhodoferax ferrireducens).